A 195-amino-acid chain; its full sequence is Rubrerythrin-1 (195 aa).

One can recognise a Ferritin-like diiron domain in the interval 3–150; sequence SLKGTKTAEN…ALLKNIEENK (148 aa). Residues Glu20, Glu53, Glu98, Glu101, Glu132, His135, Cys162, Cys165, Cys178, and Cys181 each contribute to the Fe(3+) site. A Rubredoxin-like domain is found at 157–191; it reads VKFWKCIKCGYIFEGKTAPKVCPACLHPQAYFEIL.

In terms of assembly, homodimer. Requires Fe(3+) as cofactor.

The enzyme catalyses H2O2 + NADH + H(+) = NAD(+) + 2 H2O. Its activity is regulated as follows. Rubredoxin (Rd) increases the NADH consumption rate by serving as an intermediary electron-transfer shuttle between NROR and RubY. Its function is as follows. Functions as the terminal component of an NADH peroxidase (NADH:H(2)O(2) oxidoreductase) when using NADH:rubredoxin oxidoreductase (NROR) as the electron transport intermediary from NADH to RubY. This chain is Rubrerythrin-1 (rbr1), found in Clostridium acetobutylicum (strain ATCC 824 / DSM 792 / JCM 1419 / IAM 19013 / LMG 5710 / NBRC 13948 / NRRL B-527 / VKM B-1787 / 2291 / W).